The following is a 465-amino-acid chain: 28S rRNA (cytosine-C(5))-methyltransferase (465 aa).

Glycine 2 carries the post-translational modification N-acetylglycine. Phosphoserine is present on serine 167. S-adenosyl-L-methionine is bound by residues 234–240 (CAAPGNK), aspartate 258, arginine 263, and aspartate 305. Cysteine 359 acts as the Nucleophile in catalysis. Residues 430–465 (TPAPQTDAMDPEPLSQVPKRKRRRKAAVGASMQPST) are disordered.

The protein belongs to the class I-like SAM-binding methyltransferase superfamily. RsmB/NOP family. In the hippocampus, specifically expressed in adult hippocampal NG2-positive oligodendrocyte precursor cells (at protein level).

The protein resides in the nucleus. It is found in the nucleolus. The enzyme catalyses a cytidine in 28S rRNA + S-adenosyl-L-methionine = a 5-methylcytidine in 28S rRNA + S-adenosyl-L-homocysteine + H(+). Functionally, S-adenosyl-L-methionine-dependent methyltransferase that specifically methylates the C(5) position of cytosine 3438 (m5C3438) in 28S rRNA. m5C3782 promotes protein translation without affecting ribosome biogenesis and fidelity. Required for corpus callosum and cerebral cortex development. This Mus musculus (Mouse) protein is 28S rRNA (cytosine-C(5))-methyltransferase.